Here is a 398-residue protein sequence, read N- to C-terminus: DNA-directed RNA polymerase III subunit RPC4 (398 aa).

The segment at 1–114 (MSEGNAAGEP…SHSIFEQGPA (114 aa)) is disordered. Ser2 is modified (N-acetylserine). Ser42 bears the Phosphoserine mark. Basic and acidic residues predominate over residues 66–100 (KIKEEPKEEVTVKKEKRERDRDRQREGHGRGRGRP). Residues Lys68 and Lys78 each participate in a glycyl lysine isopeptide (Lys-Gly) (interchain with G-Cter in SUMO2) cross-link. Omega-N-methylarginine occurs at positions 95, 97, and 99. Glycyl lysine isopeptide (Lys-Gly) (interchain with G-Cter in SUMO2) cross-links involve residues Lys141, Lys152, Lys160, Lys190, Lys199, Lys206, Lys220, Lys285, Lys302, Lys310, and Lys396. The disordered stretch occupies residues 220-244 (KEEPRDEEEEAKMKAPPKAARKTPG).

Belongs to the eukaryotic RPC4/POLR3D RNA polymerase subunit family. Component of the RNA polymerase III complex consisting of 17 subunits: a ten-subunit horseshoe-shaped catalytic core composed of POLR3A/RPC1, POLR3B/RPC2, POLR1C/RPAC1, POLR1D/RPAC2, POLR3K/RPC10, POLR2E/RPABC1, POLR2F/RPABC2, POLR2H/RPABC3, POLR2K/RPABC4 and POLR2L/RPABC5; a mobile stalk composed of two subunits POLR3H/RPC8 and CRCP/RPC9, protruding from the core and functioning primarily in transcription initiation; and additional subunits homologous to general transcription factors of the RNA polymerase II machinery, POLR3C/RPC3-POLR3F/RPC6-POLR3G/RPC7 heterotrimer required for transcription initiation and POLR3D/RPC4-POLR3E/RPC5 heterodimer involved in both transcription initiation and termination. Sumoylation on Lys-141 can serve as a signal to mark misfolded Pol III for proteasomal degradation.

The protein localises to the nucleus. In terms of biological role, DNA-dependent RNA polymerase catalyzes the transcription of DNA into RNA using the four ribonucleoside triphosphates as substrates. Specific peripheric component of RNA polymerase III (Pol III) which synthesizes small non-coding RNAs including 5S rRNA, snRNAs, tRNAs and miRNAs from at least 500 distinct genomic loci. Assembles with POLR3E/RPC5 forming a subcomplex that binds the Pol III core. Enables recruitment of Pol III at transcription initiation site and drives transcription initiation from both type 2 and type 3 DNA promoters. Required for efficient transcription termination and reinitiation. Pol III plays a key role in sensing and limiting infection by intracellular bacteria and DNA viruses. Acts as nuclear and cytosolic DNA sensor involved in innate immune response. Can sense non-self dsDNA that serves as template for transcription into dsRNA. The non-self RNA polymerase III transcripts, such as Epstein-Barr virus-encoded RNAs (EBERs) induce type I interferon and NF-kappa-B through the RIG-I pathway. The sequence is that of DNA-directed RNA polymerase III subunit RPC4 from Homo sapiens (Human).